Reading from the N-terminus, the 3828-residue chain is Histone-lysine N-methyltransferase trithorax (3828 aa).

Disordered regions lie at residues 25–179 (EDEA…AAAA), 356–390 (AVKSSGSSPNPNHNPNAVAGSTSAAAPGAPTATKQ), and 512–589 (FRKQ…RSTR). Positions 29-57 (ASAAAAAAAATAATTEQHQQSEQSAGSSA) are enriched in low complexity. The segment covering 77 to 89 (AATSGNRGASSGA) has biased composition (polar residues). Positions 101–114 (GNGSSTGSKTTNGG) are enriched in low complexity. Acidic residues predominate over residues 152–165 (DGTEDTNNDDDDDS). Residues 359 to 387 (SSGSSPNPNHNPNAVAGSTSAAAPGAPTA) are compositionally biased toward low complexity. The span at 513 to 523 (RKQEPQHKTPE) shows a compositional bias: basic and acidic residues. The segment covering 524 to 553 (DNDDDGSASSDAIEDDEDIDDDDAEENEEA) has biased composition (acidic residues). The span at 554–581 (ASEKSAETTASVDEKEADDRQLVMDKHF) shows a compositional bias: basic and acidic residues. The segment at residues 725-839 (ASTCAVCSAP…AGHRSRLSAI (115 aa)) is a DNA-binding region (nuclear receptor). Disordered stretches follow at residues 933–1036 (ESKE…SAVP), 1075–1094 (ELAAAEAGPAPTTTTTTTSP), and 1131–1170 (AQPAVKSVLESRSSKSNTQTEAKKTPATSGSSKGKVTTRN). Residues 960–974 (AKQDKEKARELEAEK) show a composition bias toward basic and acidic residues. Low complexity-rich tracts occupy residues 998–1022 (ASTTTTVSAASSSTSHTSSAATNSS) and 1078–1094 (AAEAGPAPTTTTTTTSP). Residues 1140–1170 (ESRSSKSNTQTEAKKTPATSGSSKGKVTTRN) are compositionally biased toward polar residues. 3 consecutive PHD-type zinc fingers follow at residues 1251 to 1334 (RALC…CTVC), 1335 to 1380 (YTCN…CLKC), and 1408 to 1469 (GNFC…CARR). The Bromo domain occupies 1483–1644 (AVMEEFKSSL…SEQFPWFQNE (162 aa)). The C2HC pre-PHD-type zinc-finger motif lies at 1708-1748 (TRVCLFCRKSGEGLSGEEARLLYCGHDCWVHINCAMWSAEV). The PHD-type 4 zinc finger occupies 1769–1816 (IKCTVCGNRGATVGCNVKSCGEHYHYPCARTIDCAFLTDKSMYCPAHA). Residues 1856 to 1913 (KVQFHIGSVAVRQLGSIVPRFSDSFEAIVPINFLCSRLYWSSKEPWKIVEYTVRTTIQ) form the FYR N-terminal domain. Disordered stretches follow at residues 2252–2272 (CEPMSTSESESETATGTAQLS), 2464–2510 (AHQK…QQQQ), 2826–2848 (RNTNANKSPISVLSKVQPQPQQS), 2897–2973 (RQQQ…SPAA), 2988–3031 (APAP…QLSM), 3117–3178 (ASAN…VPAG), 3314–3338 (NGSGGGAAEGIGQVDDAEEDEDDDD), and 3457–3487 (KLDVPQQQPDTVPPNVVPTAAAPQQPPPMRD). Composition is skewed to low complexity over residues 2253-2268 (EPMSTSESESETATGT), 2483-2510 (QGQQQQQRHQQHQQHQQHQQQQQQQQQQ), and 2836-2848 (SVLSKVQPQPQQS). The span at 2897–2917 (RQQQANELKNKQAAGQQTGST) shows a compositional bias: polar residues. Composition is skewed to low complexity over residues 2956–2973 (ATSAASMQHHQQQQSPAA), 2988–2997 (APAPQPQQQE), 3005–3031 (LHQQQQQQQQQQQHMQQHQQQQQQLSM), and 3117–3132 (ASANNSSNSNVTQQNS). Over residues 3148–3164 (QQRQEPTPLSNDVVVQS) the composition is skewed to polar residues. Residues 3328–3338 (DDAEEDEDDDD) show a composition bias toward acidic residues. In terms of domain architecture, FYR C-terminal spans 3493-3577 (GPHLLYEIQS…EKCVKYTPKY (85 aa)). The region spanning 3690 to 3806 (DYVGVFRSHI…QGEELTYDYK (117 aa)) is the SET domain. S-adenosyl-L-methionine-binding positions include histidine 3700, arginine 3702, tyrosine 3744, and 3767–3768 (NH). Zn(2+) contacts are provided by cysteine 3770, cysteine 3816, cysteine 3818, and cysteine 3823. The 17-residue stretch at 3812–3828 (EKIPCSCGSKRCRKYLN) folds into the Post-SET domain.

This sequence belongs to the class V-like SAM-binding methyltransferase superfamily. Histone-lysine methyltransferase family. TRX/MLL subfamily. In terms of assembly, interacts with ash1 via its SET domain.

It localises to the nucleus. The enzyme catalyses L-lysyl(9)-[histone H3] + 3 S-adenosyl-L-methionine = N(6),N(6),N(6)-trimethyl-L-lysyl(9)-[histone H3] + 3 S-adenosyl-L-homocysteine + 3 H(+). Histone methyltransferase that methylates 'Lys-4' of histone H3 (H3K4me). H3K4me represents a specific tag for epigenetic transcriptional activation. Functions in segment determination through interaction with genes of bithorax (BX-C) and antennapedia (ANT-C) complexes. Acts as an activator of BX-C. Involved in the very early regulation of homeotic genes expressed only in the posterior region of the embryo. This is Histone-lysine N-methyltransferase trithorax (trx) from Drosophila virilis (Fruit fly).